The following is an 84-amino-acid chain: UPF0291 protein SMU_447 (84 aa).

A disordered region spans residues 57–84; it reads EGNDITPAKLKEIQRQKGIHGRKPEDNS.

This sequence belongs to the UPF0291 family.

The protein localises to the cytoplasm. In Streptococcus mutans serotype c (strain ATCC 700610 / UA159), this protein is UPF0291 protein SMU_447.